The chain runs to 595 residues: MARFNARLFSIAILGFQVARSAITYQHPDDLPGDVDYDFIVAGGGTAGLVVASRLGENSKWNVLVIEAGPSNKDVFATRVPGLAETLPTSHIDWNYTTVPQQALGGRSLNYSRAMILGGCSTHNGMVYTRGSKDDWNKWADVTGNRDLSWDSILPIMKKVEKFSEDFSDQSVEGHIDPSVHGNDGKLSVVASYTNVSFNDLLLETTKELVDEFPFKLDMNDGNPVGLTWNQYTIDHNAERSSSATAYLESTGDNVHVLLNTRVTRIVPTGKTNFRTVEFAVDAGGPRKQLTAKKEVILSGGFIASPQILMNSGIGDQEALKAVGVDTLVNNPSVGKNVSDQAATLVLFDTTLPNTDFDVDAAIVEWNNSHAGPLATGAPLNHLIWVRLSDDKLSGSDPSSGKDSPHIEFQFSKISHRIPPANVPNQVALPSQDSIGVVIQFSVVNLNSISRGSVSLNDNNPFSHPLIDLNMLGEEQDIAILREGVHSARRMLSSEAFKPFVNGSVHPPANITSDEDLDAFLHTTTKSYLHGVGTLSMSPQNASWGVVDPDFRVKGTTGLRVVDASVIPSVPAGHTQTPVYAFAEYASIVIAKSYN.

A signal peptide spans 1–21; it reads MARFNARLFSIAILGFQVARS. 2 N-linked (GlcNAc...) asparagine glycosylation sites follow: N95 and N110. The residue at position 123 (H123) is a Tele-8alpha-FAD histidine. N-linked (GlcNAc...) asparagine glycans are attached at residues N195, N337, N367, N502, and N510. H530 acts as the Proton acceptor in catalysis. A glycan (N-linked (GlcNAc...) asparagine) is linked at N541. The active site involves H574.

The protein belongs to the GMC oxidoreductase family. Monomer. Requires FAD as cofactor. In terms of processing, N-glycosylated.

Its subcellular location is the secreted. It carries out the reaction pyranose + acceptor = pyranos-2-ulose + reduced acceptor.. It catalyses the reaction pyranose + acceptor = pyranos-3-ulose + reduced acceptor.. The enzyme catalyses pyranose + acceptor = pyranos-2,3-diulose + reduced acceptor.. The catalysed reaction is a pyranoside + acceptor = a pyranosid-3-ulose + reduced acceptor.. It carries out the reaction a pyranoside + acceptor = a pyranosid-3,4-diulose + reduced acceptor.. Functionally, catalyzes the single-oxidation or sequential double oxidation reaction of carbohydrates primarily at carbon-2 and/or carbon-3 with the concomitant reduction of the flavin. The enzyme exhibits a broad sugar substrate specificity, oxidizing different aldopyranoses to the corresponding C-1, C-2, C-3 or C-1,2, C-2,3 and C-3,4 (di)dehydro sugars with substrate-specific regioselectivity. Accepts only a narrow range of electron acceptors such as substituted benzoquinones and complexed metal ions and reacts extremely slowly with O(2) as acceptor. May play a role in the natural recycling of plant matter by oxidizing all major monosaccharides in lignocellulose and by reducing quinone compounds or reactive radical species generated during lignin depolymerization. The chain is Pyranose dehydrogenase from Agaricus campestris (Field mushroom).